We begin with the raw amino-acid sequence, 329 residues long: Phospho-N-acetylmuramoyl-pentapeptide-transferase (329 aa).

9 helical membrane passes run 1-21 (MLLN…IGIP), 53-73 (MGGF…ALVF), 76-96 (FSPA…IGFL), 109-129 (GLTA…SYFI), 141-161 (ILSW…IWLV), 175-195 (GLAS…AVVH), 198-218 (YDVL…FVFN), 237-257 (FLAI…IGAV), and 309-329 (IVFW…YFAF).

It belongs to the glycosyltransferase 4 family. MraY subfamily. It depends on Mg(2+) as a cofactor.

The protein localises to the cell membrane. The enzyme catalyses UDP-N-acetyl-alpha-D-muramoyl-L-alanyl-gamma-D-glutamyl-L-lysyl-D-alanyl-D-alanine + di-trans,octa-cis-undecaprenyl phosphate = Mur2Ac(oyl-L-Ala-gamma-D-Glu-L-Lys-D-Ala-D-Ala)-di-trans,octa-cis-undecaprenyl diphosphate + UMP. Its pathway is cell wall biogenesis; peptidoglycan biosynthesis. Its function is as follows. Catalyzes the initial step of the lipid cycle reactions in the biosynthesis of the cell wall peptidoglycan: transfers peptidoglycan precursor phospho-MurNAc-pentapeptide from UDP-MurNAc-pentapeptide onto the lipid carrier undecaprenyl phosphate, yielding undecaprenyl-pyrophosphoryl-MurNAc-pentapeptide, known as lipid I. The polypeptide is Phospho-N-acetylmuramoyl-pentapeptide-transferase (Lactococcus lactis subsp. cremoris (strain SK11)).